An 813-amino-acid chain; its full sequence is Ribosome-releasing factor 2, mitochondrial (813 aa).

The transit peptide at methionine 1–glutamine 20 directs the protein to the mitochondrion. The 289-residue stretch at asparagine 26–valine 314 folds into the tr-type G domain. GTP is bound by residues alanine 35–threonine 42, aspartate 99–histidine 103, and asparagine 153–aspartate 156.

The protein belongs to the TRAFAC class translation factor GTPase superfamily. Classic translation factor GTPase family. EF-G/EF-2 subfamily.

It localises to the mitochondrion. Its function is as follows. Mitochondrial GTPase that mediates the disassembly of ribosomes from messenger RNA at the termination of mitochondrial protein biosynthesis. Not involved in the GTP-dependent ribosomal translocation step during translation elongation. This chain is Ribosome-releasing factor 2, mitochondrial (mef2), found in Schizosaccharomyces pombe (strain 972 / ATCC 24843) (Fission yeast).